The primary structure comprises 122 residues: Large ribosomal subunit protein uL14 (122 aa).

The protein belongs to the universal ribosomal protein uL14 family. In terms of assembly, part of the 50S ribosomal subunit. Forms a cluster with proteins L3 and L19. In the 70S ribosome, L14 and L19 interact and together make contacts with the 16S rRNA in bridges B5 and B8.

In terms of biological role, binds to 23S rRNA. Forms part of two intersubunit bridges in the 70S ribosome. This Mycolicibacterium smegmatis (strain ATCC 700084 / mc(2)155) (Mycobacterium smegmatis) protein is Large ribosomal subunit protein uL14.